Reading from the N-terminus, the 197-residue chain is UPF0200 protein MJ1399 (197 aa).

8 to 15 (GMPGAGKS) serves as a coordination point for ATP.

Belongs to the UPF0200 family.

This chain is UPF0200 protein MJ1399, found in Methanocaldococcus jannaschii (strain ATCC 43067 / DSM 2661 / JAL-1 / JCM 10045 / NBRC 100440) (Methanococcus jannaschii).